The following is a 731-amino-acid chain: Polyribonucleotide nucleotidyltransferase (731 aa).

2 residues coordinate Mg(2+): Asp488 and Asp494. One can recognise a KH domain in the interval Pro555–Ile614. Residues Gly624–Lys692 form the S1 motif domain. Positions Ala693–Glu731 are disordered. A compositionally biased stretch (basic and acidic residues) spans Val694–Asn722.

This sequence belongs to the polyribonucleotide nucleotidyltransferase family. Mg(2+) is required as a cofactor.

It is found in the cytoplasm. It catalyses the reaction RNA(n+1) + phosphate = RNA(n) + a ribonucleoside 5'-diphosphate. Involved in mRNA degradation. Catalyzes the phosphorolysis of single-stranded polyribonucleotides processively in the 3'- to 5'-direction. In Bartonella tribocorum (strain CIP 105476 / IBS 506), this protein is Polyribonucleotide nucleotidyltransferase.